A 618-amino-acid polypeptide reads, in one-letter code: MHKTASQRLFPGPSYQNIKSIMEDSTILSDWTNSNKQKMKYDFSCELYRMSTYSTFPAGVPVSERSLARAGFYYTGVNDKVKCFCCGLMLDNWKLGDSPIQKHKQLYPSCSFIQNLVSASLGSTSKNTSPMRNSFAHSLSPTLEHSSLFSGSYSSLSPNPLNSRAVEDISSSRTNPYSYAMSTEEARFLTYHMWPLTFLSPSELARAGFYYIGPGDRVACFACGGKLSNWEPKDDAMSEHRRHFPNCPFLENSLETLRFSISNLSMQTHAARMRTFMYWPSSVPVQPEQLASAGFYYVGRNDDVKCFCCDGGLRCWESGDDPWVEHAKWFPRCEFLIRMKGQEFVDEIQGRYPHLLEQLLSTSDTTGEENADPPIIHFGPGESSSEDAVMMNTPVVKSALEMGFNRDLVKQTVQSKILTTGENYKTVNDIVSALLNAEDEKREEEKEKQAEEMASDDLSLIRKNRMALFQQLTCVLPILDNLLKANVINKQEHDIIKQKTQIPLQARELIDTILVKGNAAANIFKNCLKEIDSTLYKNLFVDKNMKYIPTEDVSGLSLEEQLRRLQEERTCKVCMDKEVSVVFIPCGHLVVCQECAPSLRKCPICRGIIKGTVRTFLS.

BIR repeat units lie at residues 46–113 (ELYR…CSFI), 184–250 (EEAR…CPFL), and 269–336 (HAAR…CEFL). Zn(2+)-binding residues include Cys-306, Cys-309, His-326, and Cys-333. In terms of domain architecture, CARD spans 453–543 (MASDDLSLIR…TLYKNLFVDK (91 aa)). The RING-type zinc finger occupies 571–606 (CKVCMDKEVSVVFIPCGHLVVCQECAPSLRKCPICR).

The protein belongs to the IAP family. Interacts with DIABLO/SMAC and with PRSS25; these interactions inhibit apoptotic suppressor activity. Interacts with CASP9. Interacts (via BIR domains) with TRAF2; the interaction is required for IKBKE ubiquitination. Interacts with E2F1, RIPK1, RIPK2, RIPK3, RIPK4, BIRC5/survivin and USP19. HSP90AB1. Interacts with UBXN1. Interacts with GSK3B. Interacts with several death receptors, inclusing FAS, TNFRSF10A and TNFRSF10B. Recruited to TNFRSF10B in the absence of receptor stimulation. When TNFRSF10B is stimulated, further recruited to the receptor and cleaved by caspases. Proteolytic fragments remain associated with TNFRSF10B. Post-translationally, auto-ubiquitinated and degraded by the proteasome in apoptotic cells. Upon stimulation of death receptors, including TNFRSF10B, recruited to receptors and cleaved by caspases. Proteolytic fragments remain associated with the receptors. This cleavage presumably inactivates the protein. As to expression, present in many fetal and adult tissues. Mainly expressed in adult skeletal muscle, thymus, testis, ovary, and pancreas, low or absent in brain and peripheral blood leukocytes.

Its subcellular location is the cytoplasm. It is found in the nucleus. It carries out the reaction S-ubiquitinyl-[E2 ubiquitin-conjugating enzyme]-L-cysteine + [acceptor protein]-L-lysine = [E2 ubiquitin-conjugating enzyme]-L-cysteine + N(6)-ubiquitinyl-[acceptor protein]-L-lysine.. With respect to regulation, the CARD domain inhibits the activation of E3 ubiquitin ligase activity by preventing RING domain dimerization and E2 ubiquitin donor binding and activation. The CARD domain-mediated autoinhibition of the E3 ubiquitin-protein ligase activity suppresses cell proliferation and migration. USP19 regulates the stability of BIRC2/c-IAP1 by preventing its ubiquitination. Functionally, multi-functional protein which regulates not only caspases and apoptosis, but also modulates inflammatory signaling and immunity, mitogenic kinase signaling, and cell proliferation, as well as cell invasion and metastasis. Acts as an E3 ubiquitin-protein ligase regulating NF-kappa-B signaling and regulates both canonical and non-canonical NF-kappa-B signaling by acting in opposite directions: acts as a positive regulator of the canonical pathway and suppresses constitutive activation of non-canonical NF-kappa-B signaling. The target proteins for its E3 ubiquitin-protein ligase activity include: RIPK1, RIPK2, RIPK3, RIPK4, CASP3, CASP7, CASP8, TRAF2, DIABLO/SMAC, MAP3K14/NIK, MAP3K5/ASK1, IKBKG/NEMO, IKBKE and MXD1/MAD1. Can also function as an E3 ubiquitin-protein ligase of the NEDD8 conjugation pathway, targeting effector caspases for neddylation and inactivation. Acts as an important regulator of innate immune signaling via regulation of Toll-like receptors (TLRs), Nodlike receptors (NLRs) and RIG-I like receptors (RLRs), collectively referred to as pattern recognition receptors (PRRs). Protects cells from spontaneous formation of the ripoptosome, a large multi-protein complex that has the capability to kill cancer cells in a caspase-dependent and caspase-independent manner. Suppresses ripoptosome formation by ubiquitinating RIPK1 and CASP8. Can stimulate the transcriptional activity of E2F1. Plays a role in the modulation of the cell cycle. In Homo sapiens (Human), this protein is Baculoviral IAP repeat-containing protein 2 (BIRC2).